The primary structure comprises 572 residues: Proline--tRNA ligase (572 aa).

This sequence belongs to the class-II aminoacyl-tRNA synthetase family. ProS type 1 subfamily. In terms of assembly, homodimer.

Its subcellular location is the cytoplasm. It carries out the reaction tRNA(Pro) + L-proline + ATP = L-prolyl-tRNA(Pro) + AMP + diphosphate. Catalyzes the attachment of proline to tRNA(Pro) in a two-step reaction: proline is first activated by ATP to form Pro-AMP and then transferred to the acceptor end of tRNA(Pro). As ProRS can inadvertently accommodate and process non-cognate amino acids such as alanine and cysteine, to avoid such errors it has two additional distinct editing activities against alanine. One activity is designated as 'pretransfer' editing and involves the tRNA(Pro)-independent hydrolysis of activated Ala-AMP. The other activity is designated 'posttransfer' editing and involves deacylation of mischarged Ala-tRNA(Pro). The misacylated Cys-tRNA(Pro) is not edited by ProRS. The chain is Proline--tRNA ligase from Photorhabdus laumondii subsp. laumondii (strain DSM 15139 / CIP 105565 / TT01) (Photorhabdus luminescens subsp. laumondii).